A 346-amino-acid chain; its full sequence is Biotin synthase (346 aa).

The Radical SAM core domain occupies 38-256; it reads RQVQVSTLLS…IAVARIMMPT (219 aa). Positions 53, 57, and 60 each coordinate [4Fe-4S] cluster. [2Fe-2S] cluster is bound by residues cysteine 97, cysteine 128, cysteine 188, and arginine 260.

Belongs to the radical SAM superfamily. Biotin synthase family. As to quaternary structure, homodimer. [4Fe-4S] cluster serves as cofactor. The cofactor is [2Fe-2S] cluster.

The enzyme catalyses (4R,5S)-dethiobiotin + (sulfur carrier)-SH + 2 reduced [2Fe-2S]-[ferredoxin] + 2 S-adenosyl-L-methionine = (sulfur carrier)-H + biotin + 2 5'-deoxyadenosine + 2 L-methionine + 2 oxidized [2Fe-2S]-[ferredoxin]. The protein operates within cofactor biosynthesis; biotin biosynthesis; biotin from 7,8-diaminononanoate: step 2/2. Catalyzes the conversion of dethiobiotin (DTB) to biotin by the insertion of a sulfur atom into dethiobiotin via a radical-based mechanism. The sequence is that of Biotin synthase from Shigella dysenteriae serotype 1 (strain Sd197).